The chain runs to 130 residues: Small ribosomal subunit protein uS9 (130 aa).

The tract at residues 102-130 is disordered; that stretch reads GFLTRDPRMKERKKYGLKKARRAPQFSKR. A compositionally biased stretch (basic residues) spans 111–130; it reads KERKKYGLKKARRAPQFSKR.

It belongs to the universal ribosomal protein uS9 family.

The sequence is that of Small ribosomal subunit protein uS9 from Clostridium novyi (strain NT).